We begin with the raw amino-acid sequence, 110 residues long: Large ribosomal subunit protein uL22 (110 aa).

It belongs to the universal ribosomal protein uL22 family. Part of the 50S ribosomal subunit.

In terms of biological role, this protein binds specifically to 23S rRNA; its binding is stimulated by other ribosomal proteins, e.g. L4, L17, and L20. It is important during the early stages of 50S assembly. It makes multiple contacts with different domains of the 23S rRNA in the assembled 50S subunit and ribosome. The globular domain of the protein is located near the polypeptide exit tunnel on the outside of the subunit, while an extended beta-hairpin is found that lines the wall of the exit tunnel in the center of the 70S ribosome. This chain is Large ribosomal subunit protein uL22, found in Vesicomyosocius okutanii subsp. Calyptogena okutanii (strain HA).